A 25-amino-acid polypeptide reads, in one-letter code: Glutamine synthetase 2 isozyme (25 aa).

The protein belongs to the glutamine synthetase family. As to quaternary structure, homohexamer.

It is found in the plastid. The protein localises to the chloroplast. It catalyses the reaction L-glutamate + NH4(+) + ATP = L-glutamine + ADP + phosphate + H(+). Plays a key role in the nitrogen metabolism of microorganisms, animals and plants. In Emiliania huxleyi (Coccolithophore), this protein is Glutamine synthetase 2 isozyme.